The chain runs to 465 residues: Methylenetetrahydrofolate--tRNA-(uracil-5-)-methyltransferase TrmFO (465 aa).

11–16 (GGGLAG) contributes to the FAD binding site.

Belongs to the MnmG family. TrmFO subfamily. FAD is required as a cofactor.

Its subcellular location is the cytoplasm. It catalyses the reaction uridine(54) in tRNA + (6R)-5,10-methylene-5,6,7,8-tetrahydrofolate + NADH + H(+) = 5-methyluridine(54) in tRNA + (6S)-5,6,7,8-tetrahydrofolate + NAD(+). It carries out the reaction uridine(54) in tRNA + (6R)-5,10-methylene-5,6,7,8-tetrahydrofolate + NADPH + H(+) = 5-methyluridine(54) in tRNA + (6S)-5,6,7,8-tetrahydrofolate + NADP(+). In terms of biological role, catalyzes the folate-dependent formation of 5-methyl-uridine at position 54 (M-5-U54) in all tRNAs. This is Methylenetetrahydrofolate--tRNA-(uracil-5-)-methyltransferase TrmFO from Acaryochloris marina (strain MBIC 11017).